The chain runs to 307 residues: Polysialic acid O-acetyltransferase (307 aa).

Residues 1-90 (MLRLKTQDSR…LKTQDSRLKT (90 aa)) show a composition bias toward basic and acidic residues. The interval 1 to 95 (MLRLKTQDSR…SRLKTQDSFS (95 aa)) is disordered. 13 tandem repeats follow at residues 3–9 (RLKTQDS), 10–16 (RLKTQDS), 17–23 (RLKTQDS), 24–30 (RLKTQDS), 31–37 (RLKTQDS), 38–44 (RLKTQDS), 45–51 (RLKTQDS), 52–58 (RLKTQDS), 59–65 (RLKTQDS), 66–72 (RLKTQDS), 73–79 (RLKTQDS), 80–86 (RLKTQDS), and 87–93 (RLKTQDS). A 13 X 7 AA tandem repeat of RLKTQDS encoded by a 7 nucleotide repeat region spans residues 3 to 93 (RLKTQDSRLK…QDSRLKTQDS (91 aa)). Residues 208 to 210 (DGH), Arg237, Lys243, Lys261, and Lys278 contribute to the acetyl-CoA site.

This sequence belongs to the transferase hexapeptide repeat family. As to quaternary structure, homotrimer. Hexamer formed by two homotrimers.

It carries out the reaction [N-acetyl-alpha-D-neuraminosyl-(2-&gt;8)](n) + n acetyl-CoA = [N,O(9)-diacetyl-alpha-D-neuraminosyl-(2-&gt;8)](n) + n CoA. The catalysed reaction is [N-acetyl-alpha-D-neuraminosyl-(2-&gt;8)](n) + n acetyl-CoA = [O(7),N-diacetyl-alpha-D-neuraminosyl-(2-&gt;8)](n) + n CoA. Functionally, catalyzes the O-acetylation of capsular polymeric sialic acid. Shows high substrate specificity toward polymers of sialic acid that contains a large number of residues. The chain is Polysialic acid O-acetyltransferase from Escherichia coli O1:K1 / APEC.